Here is a 558-residue protein sequence, read N- to C-terminus: Urocanate hydratase (558 aa).

NAD(+)-binding positions include 50–51, glutamine 128, 174–176, glutamate 194, arginine 199, 240–241, 261–265, 271–272, and tyrosine 320; these read GG, GMG, NA, QTSAH, and YI. The active site involves cysteine 408. Residue glycine 490 participates in NAD(+) binding.

Belongs to the urocanase family. NAD(+) serves as cofactor.

The protein localises to the cytoplasm. It catalyses the reaction 4-imidazolone-5-propanoate = trans-urocanate + H2O. It functions in the pathway amino-acid degradation; L-histidine degradation into L-glutamate; N-formimidoyl-L-glutamate from L-histidine: step 2/3. Catalyzes the conversion of urocanate to 4-imidazolone-5-propionate. This is Urocanate hydratase from Deinococcus radiodurans (strain ATCC 13939 / DSM 20539 / JCM 16871 / CCUG 27074 / LMG 4051 / NBRC 15346 / NCIMB 9279 / VKM B-1422 / R1).